A 412-amino-acid polypeptide reads, in one-letter code: DNA polymerase IV (412 aa).

In terms of domain architecture, UmuC spans 12 to 193; that stretch reads ILHVDMNCFF…LPVGAMHGIG (182 aa). Mg(2+) contacts are provided by Asp16 and Asp112. The active site involves Glu113. Positions 235-257 are disordered; the sequence is KGMDDREVDPSQMGQHKSVGNSM. Positions 246–257 are enriched in polar residues; that stretch reads QMGQHKSVGNSM.

The protein belongs to the DNA polymerase type-Y family. As to quaternary structure, monomer. It depends on Mg(2+) as a cofactor.

It is found in the cytoplasm. The catalysed reaction is DNA(n) + a 2'-deoxyribonucleoside 5'-triphosphate = DNA(n+1) + diphosphate. In terms of biological role, poorly processive, error-prone DNA polymerase involved in untargeted mutagenesis. Copies undamaged DNA at stalled replication forks, which arise in vivo from mismatched or misaligned primer ends. These misaligned primers can be extended by PolIV. Exhibits no 3'-5' exonuclease (proofreading) activity. May be involved in translesional synthesis, in conjunction with the beta clamp from PolIII. The polypeptide is DNA polymerase IV (Bacillus anthracis).